A 395-amino-acid polypeptide reads, in one-letter code: NADH-quinone oxidoreductase subunit D (395 aa).

Belongs to the complex I 49 kDa subunit family. In terms of assembly, NDH-1 is composed of 14 different subunits. Subunits NuoB, C, D, E, F, and G constitute the peripheral sector of the complex.

The protein resides in the cell inner membrane. It catalyses the reaction a quinone + NADH + 5 H(+)(in) = a quinol + NAD(+) + 4 H(+)(out). NDH-1 shuttles electrons from NADH, via FMN and iron-sulfur (Fe-S) centers, to quinones in the respiratory chain. The immediate electron acceptor for the enzyme in this species is believed to be ubiquinone. Couples the redox reaction to proton translocation (for every two electrons transferred, four hydrogen ions are translocated across the cytoplasmic membrane), and thus conserves the redox energy in a proton gradient. The chain is NADH-quinone oxidoreductase subunit D from Anaplasma phagocytophilum (strain HZ).